The chain runs to 285 residues: 2-dehydro-3-deoxyphosphooctonate aldolase (285 aa).

Belongs to the KdsA family.

The protein localises to the cytoplasm. It catalyses the reaction D-arabinose 5-phosphate + phosphoenolpyruvate + H2O = 3-deoxy-alpha-D-manno-2-octulosonate-8-phosphate + phosphate. It functions in the pathway carbohydrate biosynthesis; 3-deoxy-D-manno-octulosonate biosynthesis; 3-deoxy-D-manno-octulosonate from D-ribulose 5-phosphate: step 2/3. Its pathway is bacterial outer membrane biogenesis; lipopolysaccharide biosynthesis. This is 2-dehydro-3-deoxyphosphooctonate aldolase from Acidovorax ebreus (strain TPSY) (Diaphorobacter sp. (strain TPSY)).